Consider the following 696-residue polypeptide: SEC14 domain and spectrin repeat-containing protein 1 (696 aa).

The 153-residue stretch at M1–H153 folds into the CRAL-TRIO domain. Spectrin repeat units lie at residues E275–Q378, L381–L494, and F500–E602.

It belongs to the SOLO family. Interacts (via the spectrin 1 repeat) with TRPC4 and TRPC5 (via CIRB domain). Interacts with CTNNB1.

May act as the primary docking protein directing membrane turnover and assembly of the transient receptor potential channels TRPC4 and TRPC5. Binds phospholipids such as phosphatidylinositol monophosphates, phosphatidylinositol diphosphates (PIP2s) and phosphatidic acid, but not less polar lipids including phosphatidylcholine, phosphatidylserine, and phosphatidylinositol. The binding to PIP2s is calcium dependent. Might be involved in the plasma membrane localization of CTNNB1. The protein is SEC14 domain and spectrin repeat-containing protein 1 (Sestd1) of Mus musculus (Mouse).